We begin with the raw amino-acid sequence, 346 residues long: Flap endonuclease 1 (346 aa).

The tract at residues 1-102 (MGVTELGKLI…LEIEQRKKAK (102 aa)) is N-domain. The Mg(2+) site is built by D31, D84, E156, E158, D177, D179, and D239. The tract at residues 120-261 (DVAKYAKRAI…KALKLIWEFG (142 aa)) is I-domain.

This sequence belongs to the XPG/RAD2 endonuclease family. FEN1 subfamily. As to quaternary structure, interacts with PCNA. PCNA stimulates the nuclease activity without altering cleavage specificity. Mg(2+) serves as cofactor.

In terms of biological role, structure-specific nuclease with 5'-flap endonuclease and 5'-3' exonuclease activities involved in DNA replication and repair. During DNA replication, cleaves the 5'-overhanging flap structure that is generated by displacement synthesis when DNA polymerase encounters the 5'-end of a downstream Okazaki fragment. Binds the unpaired 3'-DNA end and kinks the DNA to facilitate 5' cleavage specificity. Cleaves one nucleotide into the double-stranded DNA from the junction in flap DNA, leaving a nick for ligation. Also involved in the base excision repair (BER) pathway. Acts as a genome stabilization factor that prevents flaps from equilibrating into structures that lead to duplications and deletions. Also possesses 5'-3' exonuclease activity on nicked or gapped double-stranded DNA. This Pyrobaculum calidifontis (strain DSM 21063 / JCM 11548 / VA1) protein is Flap endonuclease 1.